We begin with the raw amino-acid sequence, 578 residues long: Zinc finger protein with KRAB and SCAN domains 8 (578 aa).

Positions methionine 1–glutamate 20 are disordered. The residue at position 12 (serine 12) is a Phosphoserine. Lysine 26 is covalently cross-linked (Glycyl lysine isopeptide (Lys-Gly) (interchain with G-Cter in SUMO2)). The SCAN box domain maps to arginine 51 to isoleucine 133. The interval alanine 158 to glutamine 205 is disordered. Over residues asparagine 165–glutamine 205 the composition is skewed to polar residues. Glycyl lysine isopeptide (Lys-Gly) (interchain with G-Cter in SUMO2) cross-links involve residues lysine 176 and lysine 199. Phosphoserine is present on serine 201. Residues glutamate 220 to proline 316 enclose the KRAB domain. Glycyl lysine isopeptide (Lys-Gly) (interchain with G-Cter in SUMO2) cross-links involve residues lysine 221, lysine 272, and lysine 288. C2H2-type zinc fingers lie at residues histidine 322–histidine 344 and tyrosine 350–histidine 372. Residues lysine 374 and lysine 376 each participate in a glycyl lysine isopeptide (Lys-Gly) (interchain with G-Cter in SUMO2) cross-link. 7 C2H2-type zinc fingers span residues tyrosine 378–histidine 400, tyrosine 406–histidine 428, tyrosine 434–histidine 456, tyrosine 462–histidine 484, tyrosine 490–histidine 512, tyrosine 518–histidine 540, and tyrosine 546–histidine 568. Glycyl lysine isopeptide (Lys-Gly) (interchain with G-Cter in SUMO2) cross-links involve residues lysine 413 and lysine 441. A Glycyl lysine isopeptide (Lys-Gly) (interchain with G-Cter in SUMO2) cross-link involves residue lysine 502. A Glycyl lysine isopeptide (Lys-Gly) (interchain with G-Cter in SUMO2) cross-link involves residue lysine 572.

The protein belongs to the krueppel C2H2-type zinc-finger protein family.

It is found in the nucleus. Its function is as follows. May be involved in transcriptional regulation. The polypeptide is Zinc finger protein with KRAB and SCAN domains 8 (ZKSCAN8) (Homo sapiens (Human)).